The primary structure comprises 314 residues: Lipoyl synthase (314 aa).

Positions 55, 60, 66, 81, 85, 88, and 292 each coordinate [4Fe-4S] cluster. The 215-residue stretch at 67-281 folds into the Radical SAM core domain; the sequence is WEDREATFLI…SAYAEGLGFA (215 aa).

This sequence belongs to the radical SAM superfamily. Lipoyl synthase family. It depends on [4Fe-4S] cluster as a cofactor.

The protein localises to the cytoplasm. The catalysed reaction is [[Fe-S] cluster scaffold protein carrying a second [4Fe-4S](2+) cluster] + N(6)-octanoyl-L-lysyl-[protein] + 2 oxidized [2Fe-2S]-[ferredoxin] + 2 S-adenosyl-L-methionine + 4 H(+) = [[Fe-S] cluster scaffold protein] + N(6)-[(R)-dihydrolipoyl]-L-lysyl-[protein] + 4 Fe(3+) + 2 hydrogen sulfide + 2 5'-deoxyadenosine + 2 L-methionine + 2 reduced [2Fe-2S]-[ferredoxin]. It functions in the pathway protein modification; protein lipoylation via endogenous pathway; protein N(6)-(lipoyl)lysine from octanoyl-[acyl-carrier-protein]: step 2/2. Its function is as follows. Catalyzes the radical-mediated insertion of two sulfur atoms into the C-6 and C-8 positions of the octanoyl moiety bound to the lipoyl domains of lipoate-dependent enzymes, thereby converting the octanoylated domains into lipoylated derivatives. In Mycolicibacterium smegmatis (strain ATCC 700084 / mc(2)155) (Mycobacterium smegmatis), this protein is Lipoyl synthase.